The sequence spans 99 residues: MEADMKLAVVTGQIVCTVRHQGLAHDKLLMVEMIDAQGNPDGQCAVAIDSIGAGTGEWVLLVSGSSARQAHRSELSPVDLCVIGIVDEVVAGGKVVFHK.

One can recognise a BMV domain in the interval M5–D87.

This sequence belongs to the CcmL/EutN family. In terms of assembly, homopentamer with a small central pore.

The protein resides in the bacterial microcompartment. The protein operates within amine and polyamine degradation; ethanolamine degradation. Its function is as follows. Probably forms vertices in the bacterial microcompartment (BMC) shell dedicated to ethanolamine degradation. Expression of eutK, eutL, eutM, eutN, eutS (eutSMNLK) in E.coli leads to formation of a single BMC. Coexpression of eutQ with eutSMNLK permits E.coli to make cells with more than one mobile BMC, as is usual in vivo. It may be involved in transporting positively charged molecules into and out of the BMC. The ethanolamine (EA) catabolic bacterial microcompartment (BMC) probably concentrates low levels of ethanolamine catabolic enzymes, concentrates volatile reaction intermediates, keeps the level of toxic acetaldehyde low, generates enough acetyl-CoA to support cell growth, and maintains a pool of free coenzyme A (CoA) and NAD. Functionally, expression of the eut operon allows this bacteria to use ethanolamine (EA) as a carbon, nitrogen and energy source. It relies on cobalamin (vitamin B12) both as a cofactor for the ethanolamine ammonia-lyase (EAL) activity and to induce the operon. EA enhances bacterial survival in macrophages in a concentration-dependent manner, suggesting it is an important nutrient during infection. The polypeptide is Bacterial microcompartment shell vertex protein EutN (Salmonella typhimurium (strain LT2 / SGSC1412 / ATCC 700720)).